The following is a 151-amino-acid chain: UPF0208 membrane protein KPN78578_26420 (151 aa).

2 consecutive transmembrane segments (helical) span residues 46–65 and 69–91; these read YAIR…QIAL and LGPA…WWLG.

Belongs to the UPF0208 family.

The protein localises to the cell inner membrane. This is UPF0208 membrane protein KPN78578_26420 from Klebsiella pneumoniae subsp. pneumoniae (strain ATCC 700721 / MGH 78578).